We begin with the raw amino-acid sequence, 198 residues long: Recombination protein RecR (198 aa).

The segment at 57–72 adopts a C4-type zinc-finger fold; the sequence is CSVCGNLTDEDPCAIC. One can recognise a Toprim domain in the interval 80 to 175; sequence STILIVEDSR…KVTRLARGLA (96 aa).

Belongs to the RecR family.

Functionally, may play a role in DNA repair. It seems to be involved in an RecBC-independent recombinational process of DNA repair. It may act with RecF and RecO. The chain is Recombination protein RecR from Streptococcus sanguinis (strain SK36).